The primary structure comprises 101 residues: Large ribosomal subunit protein uL6m (101 aa).

It belongs to the universal ribosomal protein uL6 family.

It is found in the mitochondrion. This is Large ribosomal subunit protein uL6m (RPL6) from Marchantia polymorpha (Common liverwort).